The sequence spans 452 residues: Maltoporin (452 aa).

Residues 1–25 (MMITLRKLPLAVAVAAGVMSAQAMA) form the signal peptide.

The protein belongs to the porin LamB (TC 1.B.3) family. As to quaternary structure, homotrimer formed of three 18-stranded antiparallel beta-barrels, containing three independent channels.

It localises to the cell outer membrane. It carries out the reaction beta-maltose(in) = beta-maltose(out). In terms of biological role, involved in the transport of maltose and maltodextrins. This Salmonella heidelberg (strain SL476) protein is Maltoporin.